Consider the following 363-residue polypeptide: UDP-N-acetylglucosamine--N-acetylmuramyl-(pentapeptide) pyrophosphoryl-undecaprenol N-acetylglucosamine transferase (363 aa).

Residues 12-14 (TAG), Ser-196, and Gln-291 contribute to the UDP-N-acetyl-alpha-D-glucosamine site.

Belongs to the glycosyltransferase 28 family. MurG subfamily.

It is found in the cell inner membrane. The catalysed reaction is di-trans,octa-cis-undecaprenyl diphospho-N-acetyl-alpha-D-muramoyl-L-alanyl-D-glutamyl-meso-2,6-diaminopimeloyl-D-alanyl-D-alanine + UDP-N-acetyl-alpha-D-glucosamine = di-trans,octa-cis-undecaprenyl diphospho-[N-acetyl-alpha-D-glucosaminyl-(1-&gt;4)]-N-acetyl-alpha-D-muramoyl-L-alanyl-D-glutamyl-meso-2,6-diaminopimeloyl-D-alanyl-D-alanine + UDP + H(+). Its pathway is cell wall biogenesis; peptidoglycan biosynthesis. Its function is as follows. Cell wall formation. Catalyzes the transfer of a GlcNAc subunit on undecaprenyl-pyrophosphoryl-MurNAc-pentapeptide (lipid intermediate I) to form undecaprenyl-pyrophosphoryl-MurNAc-(pentapeptide)GlcNAc (lipid intermediate II). The protein is UDP-N-acetylglucosamine--N-acetylmuramyl-(pentapeptide) pyrophosphoryl-undecaprenol N-acetylglucosamine transferase of Legionella pneumophila (strain Corby).